A 320-amino-acid chain; its full sequence is Cytochrome c biogenesis protein CcsA (320 aa).

Transmembrane regions (helical) follow at residues 14–34, 68–88, 101–121, 146–166, 226–246, 260–277, and 289–309; these read VLLL…WCFW, GHFP…ACTL, LVAA…SFAL, VIMV…AVLM, TITV…VWAN, TWAL…HTRL, and VASL…LLGI.

The protein belongs to the CcmF/CycK/Ccl1/NrfE/CcsA family. In terms of assembly, may interact with ccs1.

It localises to the cellular thylakoid membrane. Its function is as follows. Required during biogenesis of c-type cytochromes (cytochrome c6 and cytochrome f) at the step of heme attachment. The sequence is that of Cytochrome c biogenesis protein CcsA from Synechococcus sp. (strain WH7803).